We begin with the raw amino-acid sequence, 408 residues long: Alpha-2Da adrenergic receptor (408 aa).

The Extracellular portion of the chain corresponds to 1 to 30 (MSVTPTANSTEEAANITASPRLWPYTEPAS). Asn-8 and Asn-15 each carry an N-linked (GlcNAc...) asparagine glycan. A helical membrane pass occupies residues 31 to 55 (AIIILVVSLIILLTIVGNVLVIVAV). Residues 56–67 (LTSRALRAPQNL) lie on the Cytoplasmic side of the membrane. A helical membrane pass occupies residues 68-93 (FLVSLACADILVATLVIPFSLANEIM). Residues 94-103 (GYWYFGSTWC) lie on the Extracellular side of the membrane. A disulfide bridge connects residues Cys-103 and Cys-176. Residues 104–126 (AFYLALDVLFCTSSIVHLCAISL) form a helical membrane-spanning segment. Residues 127–147 (DRYWSVTKAVRYNLKRTPRRI) are Cytoplasmic-facing. Residues 148-170 (KCMIAVVWLISAVISFPPLIMTK) form a helical membrane-spanning segment. The Extracellular portion of the chain corresponds to 171–181 (HDEKECLINDE). Residues 182–205 (TWYILSSCAVSFFAPGLIMITVYC) form a helical membrane-spanning segment. Residues 206–332 (KIYRVAKQRS…QMREKRFTFV (127 aa)) are Cytoplasmic-facing. A disordered region spans residues 242-306 (FEKESPSSNS…SCRVSWAAHQ (65 aa)). Positions 260–270 (ELDDIDLEESA) are enriched in acidic residues. Residues 277-286 (RGSRFSKRRR) show a composition bias toward basic residues. The helical transmembrane segment at 333 to 356 (LAVVMGVFVLCWFPFFFTYSLQAV) threads the bilayer. Residues 357–369 (CGERCGPPEALFK) lie on the Extracellular side of the membrane. Residues 370–390 (LFFWIGYCNSSVNPIIYTIFN) traverse the membrane as a helical segment. The Cytoplasmic segment spans residues 391–408 (RDFRKAFKKVVCWSAQRT).

It belongs to the G-protein coupled receptor 1 family. Adrenergic receptor subfamily. ADRA2D sub-subfamily.

Its subcellular location is the cell membrane. In terms of biological role, alpha-2 adrenergic receptors mediate the catecholamine-induced inhibition of adenylate cyclase through the action of G proteins. The order of potency for this receptor is dexmedetomidine &gt; norepinephrine &gt; epinephrine &gt; oxymetazoline. The protein is Alpha-2Da adrenergic receptor (adra2da) of Danio rerio (Zebrafish).